A 342-amino-acid polypeptide reads, in one-letter code: Global transcription regulator FGP1 (342 aa).

The disordered stretch occupies residues 91–113 (FSPGEKKRASKKPKKQAGVAKAY).

It belongs to the MIT1/WOR1 family.

The protein resides in the nucleus. Global transcriptional regulator of pathogenicity. Regulates many genes during growth in putrescine medium and during infection. Involved in the developmental processes of conidium formation and sexual reproduction and modulates a morphological change that accompanies mycotoxin production. The polypeptide is Global transcription regulator FGP1 (Gibberella zeae (strain ATCC MYA-4620 / CBS 123657 / FGSC 9075 / NRRL 31084 / PH-1) (Wheat head blight fungus)).